The primary structure comprises 635 residues: ATP-binding protein Uup (635 aa).

2 consecutive ABC transporter domains span residues 1–253 and 320–546; these read MSLI…RVEE and FEME…KTEE. ATP-binding positions include 36-43 and 352-359; these read GRNGAGKS and GPNGCGKT. Positions 551–635 are C-terminal domain (CTD), binds DNA, required to complement a deletion mutant; the sequence is KAETVKRSSS…EYLEALKNGG (85 aa). A coiled-coil region spans residues 563-631; it reads SYKLQRELEQ…FERWEYLEAL (69 aa).

This sequence belongs to the ABC transporter superfamily. ABCF family. Uup subfamily.

It is found in the cytoplasm. The catalysed reaction is ATP + H2O = ADP + phosphate + H(+). Its activity is regulated as follows. ATPase activity inhibited by N-ethylmaleimide but not by vanadate. In terms of biological role, probably plays a role in ribosome assembly or function; overexpression suppresses cold-sensitive growth of a bipA deletion. May be involved in resolution of branched DNA intermediates that result from template switching in postreplication gaps. Binds DNA at Holliday junctions. May be involved in the correct segregation of nucleoids. Has ATPase activity, binds DNA non-sequence specifically; the presence of DNA does not change the ATPase activity. Mutations in this gene cause an increase in RecA-independent precise excision of transposons and insertion elements, and also reduce bacteriophage Mu growth. Genetic interactions among priB, dam, lexA, nagC, polA, rdgB, rdgB, rep and uup link the PriA-PriB replication restart pathway to DNA double-strand break repair. The polypeptide is ATP-binding protein Uup (Escherichia coli (strain K12)).